Here is a 412-residue protein sequence, read N- to C-terminus: 4-hydroxyphenylpyruvate dioxygenase (412 aa).

2 VOC domains span residues 31–179 (GYDH…LISR) and 209–369 (RIDH…LFTK). The Fe cation site is built by His-212, His-295, and Glu-380.

It belongs to the 4HPPD family. It depends on Fe cation as a cofactor.

It carries out the reaction 3-(4-hydroxyphenyl)pyruvate + O2 = homogentisate + CO2. It functions in the pathway amino-acid degradation; L-phenylalanine degradation; acetoacetate and fumarate from L-phenylalanine: step 3/6. This is 4-hydroxyphenylpyruvate dioxygenase from Neurospora crassa (strain ATCC 24698 / 74-OR23-1A / CBS 708.71 / DSM 1257 / FGSC 987).